The sequence spans 153 residues: H/ACA ribonucleoprotein complex subunit 2 (153 aa).

Residue K3 forms a Glycyl lysine isopeptide (Lys-Gly) (interchain with G-Cter in SUMO2) linkage. K5 participates in a covalent cross-link: Glycyl lysine isopeptide (Lys-Gly) (interchain with G-Cter in SUMO); alternate. A Glycyl lysine isopeptide (Lys-Gly) (interchain with G-Cter in SUMO1); alternate cross-link involves residue K5. K5 participates in a covalent cross-link: Glycyl lysine isopeptide (Lys-Gly) (interchain with G-Cter in SUMO2); alternate.

The protein belongs to the eukaryotic ribosomal protein eL8 family. Part of the H/ACA small nucleolar ribonucleoprotein (H/ACA snoRNP) complex, which contains NHP2/NOLA2, GAR1/NOLA1, NOP10/NOLA3, and DKC1/NOLA4, which is presumed to be the catalytic subunit. The complex contains a stable core formed by binding of one or two NOP10-DKC1 heterodimers to NHP2; GAR1 subsequently binds to this core via DKC1. The complex binds a box H/ACA small nucleolar RNA (snoRNA), which may target the specific site of modification within the RNA substrate. During assembly, the complex contains NAF1 instead of GAR1/NOLA1. The complex also interacts with TERC, which contains a 3'-terminal domain related to the box H/ACA snoRNAs. Specific interactions with snoRNAs or TERC are mediated by GAR1 and NHP2. Associates with NOLC1/NOPP140. H/ACA snoRNPs interact with the SMN complex, consisting of SMN1 or SMN2, GEMIN2/SIP1, DDX20/GEMIN3, and GEMIN4. This is mediated by interaction between GAR1 and SMN1 or SMN2. The SMN complex may be required for correct assembly of the H/ACA snoRNP complex. Component of the telomerase holoenzyme complex composed of one molecule of TERT, one molecule of WRAP53/TCAB1, two molecules of H/ACA ribonucleoprotein complex subunits DKC1, NOP10, NHP2 and GAR1, and a telomerase RNA template component (TERC). The telomerase holoenzyme complex is associated with TEP1, SMG6/EST1A and POT1.

It is found in the nucleus. The protein localises to the nucleolus. Its subcellular location is the cajal body. Required for ribosome biogenesis and telomere maintenance. Part of the H/ACA small nucleolar ribonucleoprotein (H/ACA snoRNP) complex, which catalyzes pseudouridylation of rRNA. This involves the isomerization of uridine such that the ribose is subsequently attached to C5, instead of the normal N1. Each rRNA can contain up to 100 pseudouridine ('psi') residues, which may serve to stabilize the conformation of rRNAs. May also be required for correct processing or intranuclear trafficking of TERC, the RNA component of the telomerase reverse transcriptase (TERT) holoenzyme. The polypeptide is H/ACA ribonucleoprotein complex subunit 2 (NHP2) (Bos taurus (Bovine)).